Consider the following 456-residue polypeptide: Proline--tRNA ligase (456 aa).

It belongs to the class-II aminoacyl-tRNA synthetase family. ProS type 3 subfamily. As to quaternary structure, homodimer.

It localises to the cytoplasm. It catalyses the reaction tRNA(Pro) + L-proline + ATP = L-prolyl-tRNA(Pro) + AMP + diphosphate. Its function is as follows. Catalyzes the attachment of proline to tRNA(Pro) in a two-step reaction: proline is first activated by ATP to form Pro-AMP and then transferred to the acceptor end of tRNA(Pro). The protein is Proline--tRNA ligase of Methanococcus aeolicus (strain ATCC BAA-1280 / DSM 17508 / OCM 812 / Nankai-3).